Here is a 462-residue protein sequence, read N- to C-terminus: CUGBP Elav-like family member 3-B (462 aa).

RRM domains follow at residues 7–88, 95–175, and 377–455; these read IKLF…PADS, RKLF…FADT, and CNIF…LKRP.

It belongs to the CELF/BRUNOL family.

It is found in the nucleus. Its subcellular location is the cytoplasm. RNA-binding protein that may be involved in the regulation of pre-mRNA alternative splicing. The polypeptide is CUGBP Elav-like family member 3-B (tnrc4-b) (Xenopus laevis (African clawed frog)).